Consider the following 521-residue polypeptide: uncharacterized protein (521 aa).

The segment at 1–25 is disordered; that stretch reads MLQRSLGVNGRKLAMSARSAKRERK. A run of 6 helical transmembrane segments spans residues 68–88, 114–134, 160–180, 192–212, 290–310, and 399–419; these read GAVW…GAVL, VLIV…SLTV, VVLA…HTVG, VAVT…IYFL, ALLV…GWCW, and LLFW…CAQI.

It is found in the cell membrane. This is an uncharacterized protein from Mycobacterium bovis (strain ATCC BAA-935 / AF2122/97).